Reading from the N-terminus, the 247-residue chain is Large ribosomal subunit protein uL3 (247 aa).

2 disordered regions span residues 140–164 and 212–247; these read SHRS…KMPG and LPKE…KEGA. Residue Gln-151 is modified to N5-methylglutamine. Over residues 232-247 the composition is skewed to basic and acidic residues; that stretch reads DEDKAPADTPAEKEGA.

It belongs to the universal ribosomal protein uL3 family. Part of the 50S ribosomal subunit. Forms a cluster with proteins L14 and L19. Methylated by PrmB.

One of the primary rRNA binding proteins, it binds directly near the 3'-end of the 23S rRNA, where it nucleates assembly of the 50S subunit. The polypeptide is Large ribosomal subunit protein uL3 (Nitrobacter winogradskyi (strain ATCC 25391 / DSM 10237 / CIP 104748 / NCIMB 11846 / Nb-255)).